A 501-amino-acid chain; its full sequence is MNRRQVLTGLAALPLLQAKPDPAAADRSSSIDFDPWMVRKLARELASKPYEAPDSSLPASLNDLSYDAYRSLRFRPERALWRAENLPFQVQFFHRGFLYKNRVTIFEVADGKARHVPYRADDFSFGDVAPPPDSDLGFAGFRIHAPLQRADYYDEVSAFLGAAYFRAVTKGERYGLSARGLSIDTGQSSGEEFPLFKTFWLERPAPGASSMVVHALLDSKSVAGAYRFTIRPGDTTVFDVEMALYPRVDLQHAGLAPMTSMFLFGPNDPADTPDFRAAVHDSDGLAIFNGSGEELWRPLCNPKDLQISSFGDRNPRGFGLMQRERSFANYQDLESRYELRPSLWAEPIGDWTDGAVKLIEIPTREEVHDNIASFWEPKQPLRAKGEHIYTYRLHWGPDTPKPKGLARFVRTGVSARGDNDRLFVLDLAGDRLKTVDAAAVRGVVTADKGEIRNIVTQPNPAMGGWRLSFDLAQARAPVELRAVVCEGDAAVSEVWLYRWTP.

A signal peptide spans 1–25; sequence MNRRQVLTGLAALPLLQAKPDPAAA.

This sequence belongs to the OpgD/OpgG family.

Its subcellular location is the periplasm. It participates in glycan metabolism; osmoregulated periplasmic glucan (OPG) biosynthesis. In terms of biological role, involved in the biosynthesis of osmoregulated periplasmic glucans (OPGs). This is Glucans biosynthesis protein G from Rhodopseudomonas palustris (strain ATCC BAA-98 / CGA009).